The following is a 227-amino-acid chain: Uridylate kinase (227 aa).

6-10 (KVSGK) serves as a coordination point for ATP. Gly43 contributes to the UMP binding site. Residues Gly44 and Arg48 each contribute to the ATP site. Residues Asp65 and 113–119 (FQPGQST) contribute to the UMP site. Thr139, Asn140, Tyr145, and Asp148 together coordinate ATP.

Belongs to the UMP kinase family. Homohexamer.

The protein resides in the cytoplasm. The enzyme catalyses UMP + ATP = UDP + ADP. The protein operates within pyrimidine metabolism; CTP biosynthesis via de novo pathway; UDP from UMP (UMPK route): step 1/1. Inhibited by UTP. Functionally, catalyzes the reversible phosphorylation of UMP to UDP. This Sulfolobus acidocaldarius (strain ATCC 33909 / DSM 639 / JCM 8929 / NBRC 15157 / NCIMB 11770) protein is Uridylate kinase.